The primary structure comprises 24 residues: Ascaphin-5 (24 aa).

As to expression, expressed by the skin glands.

Its subcellular location is the secreted. Functionally, antimicrobial peptide. Synthetic peptide shows higher potency against Gram-negative bacteria than against Gram-positive bacteria. Has a very week hemolytic activity. This Ascaphus truei (Coastal tailed frog) protein is Ascaphin-5.